The primary structure comprises 129 residues: Small ribosomal subunit protein uS9 (129 aa).

The protein belongs to the universal ribosomal protein uS9 family.

This is Small ribosomal subunit protein uS9 from Helicobacter acinonychis (strain Sheeba).